Consider the following 983-residue polypeptide: Isoleucine--tRNA ligase (983 aa).

The 'HIGH' region signature appears at Pro-61–His-71. Glu-608 contributes to the L-isoleucyl-5'-AMP binding site. The 'KMSKS' region signature appears at Lys-649–Ser-653. Lys-652 lines the ATP pocket. Zn(2+) contacts are provided by Cys-952, Cys-955, Cys-972, and Cys-975.

The protein belongs to the class-I aminoacyl-tRNA synthetase family. IleS type 1 subfamily. As to quaternary structure, monomer. The cofactor is Zn(2+).

Its subcellular location is the cytoplasm. It catalyses the reaction tRNA(Ile) + L-isoleucine + ATP = L-isoleucyl-tRNA(Ile) + AMP + diphosphate. Functionally, catalyzes the attachment of isoleucine to tRNA(Ile). As IleRS can inadvertently accommodate and process structurally similar amino acids such as valine, to avoid such errors it has two additional distinct tRNA(Ile)-dependent editing activities. One activity is designated as 'pretransfer' editing and involves the hydrolysis of activated Val-AMP. The other activity is designated 'posttransfer' editing and involves deacylation of mischarged Val-tRNA(Ile). This chain is Isoleucine--tRNA ligase, found in Gloeobacter violaceus (strain ATCC 29082 / PCC 7421).